The following is a 332-amino-acid chain: MKQVQTKRDWKKLAYDVVEEKMITKEDAIAILEADDTEVLEIMNAAYIIRHHHFGKKVKLNMIINTKSGLCPEDCGYCSQSIISEAPIDKYAWLTQEKIVEGAHEAIRRKAGTYCIVASGRRPTNKEVNHVIGAVKEIRETTDLKICCCLGFLNEDQAGQLAEAGVHRYNHNLNTHANNYDSICSTHTYDDRVDTVQKAKQAGISPCSGAIFGMGETIEQRAEIAFELQRLDADSIPCNFLVAVKGTPLEGQKELTPVECLKVLAMMRFVNPTKEIRISGGRELNLRSVQPLGLFAANSIFVGDYLTTAGQEPTADWGMIEDLGFEIEECAL.

One can recognise a Radical SAM core domain in the interval 53 to 282; it reads HFGKKVKLNM…TKEIRISGGR (230 aa). Residues Cys-71, Cys-75, and Cys-78 each contribute to the [4Fe-4S] cluster site. The [2Fe-2S] cluster site is built by Cys-115, Cys-147, Cys-207, and Arg-277.

Belongs to the radical SAM superfamily. Biotin synthase family. In terms of assembly, homodimer. It depends on [4Fe-4S] cluster as a cofactor. Requires [2Fe-2S] cluster as cofactor.

It carries out the reaction (4R,5S)-dethiobiotin + (sulfur carrier)-SH + 2 reduced [2Fe-2S]-[ferredoxin] + 2 S-adenosyl-L-methionine = (sulfur carrier)-H + biotin + 2 5'-deoxyadenosine + 2 L-methionine + 2 oxidized [2Fe-2S]-[ferredoxin]. Its pathway is cofactor biosynthesis; biotin biosynthesis; biotin from 7,8-diaminononanoate: step 2/2. Catalyzes the conversion of dethiobiotin (DTB) to biotin by the insertion of a sulfur atom into dethiobiotin via a radical-based mechanism. The chain is Biotin synthase from Bacillus mycoides (strain KBAB4) (Bacillus weihenstephanensis).